Consider the following 569-residue polypeptide: Urease subunit alpha (569 aa).

Ni(2+)-binding residues include His-136, His-138, and Lys-219. N6-carboxylysine is present on Lys-219. A substrate-binding site is contributed by His-221. Ni(2+) contacts are provided by His-248 and His-274. The active-site Proton donor is the His-322. Residue Asp-362 coordinates Ni(2+).

Belongs to the metallo-dependent hydrolases superfamily. Urease alpha subunit family. As to quaternary structure, heterotrimer of UreA (gamma), UreB (beta) and UreC (alpha) subunits. Three heterotrimers associate to form the active enzyme. Ni cation serves as cofactor. Post-translationally, carboxylation allows a single lysine to coordinate two nickel ions.

Its subcellular location is the cytoplasm. It catalyses the reaction urea + 2 H2O + H(+) = hydrogencarbonate + 2 NH4(+). It functions in the pathway nitrogen metabolism; urea degradation; CO(2) and NH(3) from urea (urease route): step 1/1. The chain is Urease subunit alpha from Microcystis aeruginosa (strain NIES-843 / IAM M-2473).